We begin with the raw amino-acid sequence, 226 residues long: Spermatogenesis-associated protein 25 (226 aa).

Residues 153–173 (ICILTLAMMIAGIPTVPVPGL) form a helical membrane-spanning segment.

Belongs to the SPATA25 family. Expressed strongly in testis, weakly in epididymis and not detected in other tissues.

The protein localises to the membrane. In terms of biological role, may play a role in spermatogenesis. This Mus musculus (Mouse) protein is Spermatogenesis-associated protein 25 (Spata25).